Reading from the N-terminus, the 97-residue chain is MKGICSDAILVLATSMWMAFAIDFPLPMASERGQLDKTIVECLKNVNKCWFLSYIKPSEPICGSDQVTYSSDCHLCSKILFEGLNITKLYDGQCENS.

A signal peptide spans 1 to 21 (MKGICSDAILVLATSMWMAFA). The Kazal-like domain occupies 36 to 96 (DKTIVECLKN…TKLYDGQCEN (61 aa)). Disulfide bonds link Cys-42–Cys-76, Cys-49–Cys-73, and Cys-62–Cys-94. Asn-85 is a glycosylation site (N-linked (GlcNAc...) asparagine).

The protein resides in the secreted. Functionally, probable serine protease inhibitor. The polypeptide is Serine protease inhibitor Kazal-type 8 (SPINK8) (Homo sapiens (Human)).